A 385-amino-acid polypeptide reads, in one-letter code: Cyclin-A3-2 (385 aa).

Residues 1–110 (MADKENSTPA…STSTASPSSG (110 aa)) are disordered. 3 stretches are compositionally biased toward low complexity: residues 7 to 41 (STPASAARLTRSSAAAGAQAKRSAAAGVADGGAPP), 74 to 88 (PSSKQPEPAAEAAAP), and 96 to 110 (PVSSASTSTASPSSG).

Belongs to the cyclin family. Cyclin AB subfamily.

This is Cyclin-A3-2 (CYCA3-2) from Oryza sativa subsp. japonica (Rice).